We begin with the raw amino-acid sequence, 513 residues long: Calcium-dependent protein kinase 2 (513 aa).

Residue glycine 2 is the site of N-myristoyl glycine attachment. A Protein kinase domain is found at 72–326 (YIIDEKLGQG…IEEALNHPWI (255 aa)). ATP-binding positions include 78-86 (LGQGTYGCV) and lysine 101. Aspartate 192 acts as the Proton acceptor in catalysis. A J domain autoinhibitory motif motif is present at residues 345 to 353 (NLKNFKKEN). The j domain stretch occupies residues 345 to 380 (NLKNFKKENELKKIALTIIAKHLCDVEINNLRNIFI). The J domain EF-hand interaction motif motif lies at 354 to 363 (ELKKIALTII). 4 EF-hand domains span residues 370-405 (VEIN…IGYQ), 406-441 (KIPP…KQTY), 442-477 (LKKE…DDIE), and 480-513 (LIDK…SKKK). Residues aspartate 383, aspartate 385, serine 387, threonine 389, and glutamate 394 each contribute to the Ca(2+) site. Ca(2+) is bound by residues aspartate 455, aspartate 457, asparagine 459, lysine 461, glutamate 466, aspartate 493, asparagine 495, aspartate 497, glutamate 499, and glutamate 504.

It belongs to the protein kinase superfamily. Ser/Thr protein kinase family. CDPK subfamily. As to quaternary structure, monomer. Mg(2+) serves as cofactor. In terms of processing, myristoylated; myristoylation may target it to different subcellular compartments. Autophosphorylated in vitro.

It carries out the reaction L-seryl-[protein] + ATP = O-phospho-L-seryl-[protein] + ADP + H(+). The catalysed reaction is L-threonyl-[protein] + ATP = O-phospho-L-threonyl-[protein] + ADP + H(+). Activated by calcium. Upon calcium binding to the EF-hand domains, the C-terminus of the junction domain (J domain) undergoes a conformational change which results in the dissociation of the pseudo-substrate inhibitory motif from the catalytic domain. This, in turn, may facilitate the autophosphorylation of the activation loop at Thr-232, which leads to the kinase activation. Calcium-dependent protein kinase which acts as a sensor and effector of intracellular Ca(2+) levels probably in part downstream of cGMP-activated PKG kinase. During male gametogenesis in the mosquito gut, required for male exflagellation, possibly by regulating male gamete exit from the host erythrocytes. Not required for asexual blood stage proliferation. The protein is Calcium-dependent protein kinase 2 of Plasmodium falciparum (isolate K1 / Thailand).